Consider the following 581-residue polypeptide: Putative phospholipase B-like 3 (581 aa).

An N-terminal signal peptide occupies residues 1 to 16; sequence MKLLFFLFGLIFAVEQ. Asparagine 50, asparagine 82, asparagine 132, asparagine 169, asparagine 215, asparagine 309, asparagine 543, asparagine 546, and asparagine 560 each carry an N-linked (GlcNAc...) asparagine glycan.

It belongs to the phospholipase B-like family.

The protein resides in the secreted. In terms of biological role, putative phospholipase. This chain is Putative phospholipase B-like 3, found in Caenorhabditis elegans.